The primary structure comprises 442 residues: UDP-N-acetylmuramate--L-alanine ligase (442 aa).

109-115 (GAHGKTS) contributes to the ATP binding site.

The protein belongs to the MurCDEF family.

It localises to the cytoplasm. The catalysed reaction is UDP-N-acetyl-alpha-D-muramate + L-alanine + ATP = UDP-N-acetyl-alpha-D-muramoyl-L-alanine + ADP + phosphate + H(+). Its pathway is cell wall biogenesis; peptidoglycan biosynthesis. Functionally, cell wall formation. The sequence is that of UDP-N-acetylmuramate--L-alanine ligase from Streptococcus pyogenes serotype M3 (strain SSI-1).